The sequence spans 290 residues: tRNA dimethylallyltransferase (290 aa).

11-18 contributes to the ATP binding site; the sequence is GPTASGKS. Position 13–18 (13–18) interacts with substrate; sequence TASGKS. Interaction with substrate tRNA stretches follow at residues 36-39 and 158-162; these read DSMQ and QRIVR.

This sequence belongs to the IPP transferase family. As to quaternary structure, monomer. Mg(2+) is required as a cofactor.

It catalyses the reaction adenosine(37) in tRNA + dimethylallyl diphosphate = N(6)-dimethylallyladenosine(37) in tRNA + diphosphate. Functionally, catalyzes the transfer of a dimethylallyl group onto the adenine at position 37 in tRNAs that read codons beginning with uridine, leading to the formation of N6-(dimethylallyl)adenosine (i(6)A). This chain is tRNA dimethylallyltransferase, found in Bartonella tribocorum (strain CIP 105476 / IBS 506).